The chain runs to 429 residues: 3-phosphoshikimate 1-carboxyvinyltransferase (429 aa).

Residues Lys-20, Ser-21, and Arg-25 each contribute to the 3-phosphoshikimate site. Lys-20 contacts phosphoenolpyruvate. 2 residues coordinate phosphoenolpyruvate: Gly-89 and Arg-118. Positions 164, 165, 166, 192, 311, and 338 each coordinate 3-phosphoshikimate. Phosphoenolpyruvate is bound at residue Gln-166. Residue Asp-311 is the Proton acceptor of the active site. The phosphoenolpyruvate site is built by Arg-342 and Arg-384.

Belongs to the EPSP synthase family. As to quaternary structure, monomer.

It is found in the cytoplasm. The enzyme catalyses 3-phosphoshikimate + phosphoenolpyruvate = 5-O-(1-carboxyvinyl)-3-phosphoshikimate + phosphate. It participates in metabolic intermediate biosynthesis; chorismate biosynthesis. Its function is as follows. Catalyzes the transfer of the enolpyruvyl moiety of phosphoenolpyruvate (PEP) to the 5-hydroxyl of shikimate-3-phosphate (S3P) to produce enolpyruvyl shikimate-3-phosphate and inorganic phosphate. In Methanococcus vannielii (strain ATCC 35089 / DSM 1224 / JCM 13029 / OCM 148 / SB), this protein is 3-phosphoshikimate 1-carboxyvinyltransferase.